The primary structure comprises 392 residues: Phospho-N-acetylmuramoyl-pentapeptide-transferase (392 aa).

The next 10 helical transmembrane spans lie at 28 to 48, 74 to 94, 100 to 120, 137 to 157, 193 to 213, 225 to 245, 262 to 282, 289 to 309, 314 to 334, and 369 to 389; these read RALM…PYVI, TPTM…LMWF, FVWI…VDDW, YFWQ…SISE, VSYP…IVGA, GLAI…AYVT, SGEL…FLWF, VFMG…IAVI, IVFF…MAQV, and QVVV…LSTL.

It belongs to the glycosyltransferase 4 family. MraY subfamily. Requires Mg(2+) as cofactor.

It localises to the cell inner membrane. It catalyses the reaction UDP-N-acetyl-alpha-D-muramoyl-L-alanyl-gamma-D-glutamyl-meso-2,6-diaminopimeloyl-D-alanyl-D-alanine + di-trans,octa-cis-undecaprenyl phosphate = di-trans,octa-cis-undecaprenyl diphospho-N-acetyl-alpha-D-muramoyl-L-alanyl-D-glutamyl-meso-2,6-diaminopimeloyl-D-alanyl-D-alanine + UMP. The protein operates within cell wall biogenesis; peptidoglycan biosynthesis. In terms of biological role, catalyzes the initial step of the lipid cycle reactions in the biosynthesis of the cell wall peptidoglycan: transfers peptidoglycan precursor phospho-MurNAc-pentapeptide from UDP-MurNAc-pentapeptide onto the lipid carrier undecaprenyl phosphate, yielding undecaprenyl-pyrophosphoryl-MurNAc-pentapeptide, known as lipid I. The sequence is that of Phospho-N-acetylmuramoyl-pentapeptide-transferase from Variovorax paradoxus (strain S110).